Consider the following 198-residue polypeptide: Holliday junction resolvase RecU (198 aa).

Positions 1 to 22 (MVNYPHKVSSQKRQTSLSQPKN) are disordered. A compositionally biased stretch (polar residues) spans 11-22 (QKRQTSLSQPKN). The Mg(2+) site is built by T81, D83, E96, and Q115.

Belongs to the RecU family. It depends on Mg(2+) as a cofactor.

The protein localises to the cytoplasm. It carries out the reaction Endonucleolytic cleavage at a junction such as a reciprocal single-stranded crossover between two homologous DNA duplexes (Holliday junction).. In terms of biological role, endonuclease that resolves Holliday junction intermediates in genetic recombination. Cleaves mobile four-strand junctions by introducing symmetrical nicks in paired strands. Promotes annealing of linear ssDNA with homologous dsDNA. Required for DNA repair, homologous recombination and chromosome segregation. The sequence is that of Holliday junction resolvase RecU from Streptococcus pneumoniae (strain P1031).